Reading from the N-terminus, the 158-residue chain is NADH-quinone oxidoreductase subunit B (158 aa).

[4Fe-4S] cluster-binding residues include C36, C37, C101, and C131.

The protein belongs to the complex I 20 kDa subunit family. In terms of assembly, NDH-1 is composed of 14 different subunits. Subunits NuoB, C, D, E, F, and G constitute the peripheral sector of the complex. Requires [4Fe-4S] cluster as cofactor.

It localises to the cell inner membrane. The enzyme catalyses a quinone + NADH + 5 H(+)(in) = a quinol + NAD(+) + 4 H(+)(out). Its function is as follows. NDH-1 shuttles electrons from NADH, via FMN and iron-sulfur (Fe-S) centers, to quinones in the respiratory chain. The immediate electron acceptor for the enzyme in this species is believed to be ubiquinone. Couples the redox reaction to proton translocation (for every two electrons transferred, four hydrogen ions are translocated across the cytoplasmic membrane), and thus conserves the redox energy in a proton gradient. The sequence is that of NADH-quinone oxidoreductase subunit B from Francisella philomiragia subsp. philomiragia (strain ATCC 25017 / CCUG 19701 / FSC 153 / O#319-036).